Reading from the N-terminus, the 128-residue chain is Cytochrome c oxidase subunit 5B, mitochondrial (128 aa).

The transit peptide at 1-30 (MASRLLRGVGALAAQALRRTARGAAVTRSM) directs the protein to the mitochondrion. N6-acetyllysine occurs at positions 67 and 85. Zn(2+) is bound by residues Cys90, Cys92, Cys112, and Cys115. Lys120 is subject to N6-acetyllysine.

This sequence belongs to the cytochrome c oxidase subunit 5B family. Component of the cytochrome c oxidase (complex IV, CIV), a multisubunit enzyme composed of 14 subunits. The complex is composed of a catalytic core of 3 subunits MT-CO1, MT-CO2 and MT-CO3, encoded in the mitochondrial DNA, and 11 supernumerary subunits COX4I, COX5A, COX5B, COX6A, COX6B, COX6C, COX7A, COX7B, COX7C, COX8 and NDUFA4, which are encoded in the nuclear genome. The complex exists as a monomer or a dimer and forms supercomplexes (SCs) in the inner mitochondrial membrane with NADH-ubiquinone oxidoreductase (complex I, CI) and ubiquinol-cytochrome c oxidoreductase (cytochrome b-c1 complex, complex III, CIII), resulting in different assemblies (supercomplex SCI(1)III(2)IV(1) and megacomplex MCI(2)III(2)IV(2)).

It localises to the mitochondrion inner membrane. Its pathway is energy metabolism; oxidative phosphorylation. Functionally, component of the cytochrome c oxidase, the last enzyme in the mitochondrial electron transport chain which drives oxidative phosphorylation. The respiratory chain contains 3 multisubunit complexes succinate dehydrogenase (complex II, CII), ubiquinol-cytochrome c oxidoreductase (cytochrome b-c1 complex, complex III, CIII) and cytochrome c oxidase (complex IV, CIV), that cooperate to transfer electrons derived from NADH and succinate to molecular oxygen, creating an electrochemical gradient over the inner membrane that drives transmembrane transport and the ATP synthase. Cytochrome c oxidase is the component of the respiratory chain that catalyzes the reduction of oxygen to water. Electrons originating from reduced cytochrome c in the intermembrane space (IMS) are transferred via the dinuclear copper A center (CU(A)) of subunit 2 and heme A of subunit 1 to the active site in subunit 1, a binuclear center (BNC) formed by heme A3 and copper B (CU(B)). The BNC reduces molecular oxygen to 2 water molecules using 4 electrons from cytochrome c in the IMS and 4 protons from the mitochondrial matrix. This Mus musculus (Mouse) protein is Cytochrome c oxidase subunit 5B, mitochondrial (Cox5b).